A 410-amino-acid polypeptide reads, in one-letter code: MAAVGAEARGAWCVPCLVSLDTLQELCRKEKLTCKSIGITKRNLNNYEVEYLCDYKVVKDMEYYLVKWKGWPDSTNTWEPLQNLKCPLLLQQFSNDKHNYLSQVKKGKAITPKDNNKTLKPAIAEYIVKKAKQRIALQRWQDELNRRKNHKGMIFVENTVDLEGPPSDFYYINEYKPAPGISLVNEATFGCSCTDCFFQKCCPAEAGVLLAYNKNQQIKIPPGTPIYECNSRCQCGPDCPNRIVQKGTQYSLCIFRTSNGRGWGVKTLVKIKRMSFVMEYVGEVITSEEAERRGQFYDNKGITYLFDLDYESDEFTVDAARYGNVSHFVNHSCDPNLQVFNVFIDNLDTRLPRIALFSTRTINAGEELTFDYQMKGSGDISSDSIDHSPAKKRVRTVCKCGAVTCRGYLN.

Positions 47-105 (YEVEYLCDYKVVKDMEYYLVKWKGWPDSTNTWEPLQNLKCPLLLQQFSNDKHNYLSQVK) constitute a Chromo domain. The Pre-SET domain maps to 189–247 (FGCSCTDCFFQKCCPAEAGVLLAYNKNQQIKIPPGTPIYECNSRCQCGPDCPNRIVQKG). 9 residues coordinate Zn(2+): Cys-191, Cys-193, Cys-196, Cys-201, Cys-202, Cys-229, Cys-233, Cys-235, and Cys-239. One can recognise an SET domain in the interval 250 to 373 (YSLCIFRTSN…AGEELTFDYQ (124 aa)). Residues 261 to 263 (RGW) and 330 to 331 (NH) each bind S-adenosyl-L-methionine. Position 333 (Cys-333) interacts with Zn(2+). Tyr-372 serves as a coordination point for S-adenosyl-L-methionine. Phosphoserine occurs at positions 381, 384, and 388. The Post-SET domain maps to 394-410 (VRTVCKCGAVTCRGYLN). Zn(2+) is bound at residue Cys-398. An S-adenosyl-L-methionine-binding site is contributed by Lys-399. The Zn(2+) site is built by Cys-400 and Cys-405.

This sequence belongs to the class V-like SAM-binding methyltransferase superfamily. Histone-lysine methyltransferase family. Suvar3-9 subfamily. In terms of assembly, interacts with SMAD5. The large PER complex involved in the histone methylation is composed of at least PER2, CBX3, TRIM28, SUV39H1 and/or SUV39H2; CBX3 mediates the formation of the complex. Ubiquitinated by the DCX(DCAF13) E3 ubiquitin ligase complex, leading to its degradation.

The protein resides in the nucleus. It is found in the chromosome. Its subcellular location is the centromere. It catalyses the reaction L-lysyl(9)-[histone H3] + 3 S-adenosyl-L-methionine = N(6),N(6),N(6)-trimethyl-L-lysyl(9)-[histone H3] + 3 S-adenosyl-L-homocysteine + 3 H(+). Its function is as follows. Histone methyltransferase that specifically trimethylates 'Lys-9' of histone H3 using monomethylated H3 'Lys-9' as substrate. H3 'Lys-9' trimethylation represents a specific tag for epigenetic transcriptional repression by recruiting HP1 (CBX1, CBX3 and/or CBX5) proteins to methylated histones. Mainly functions in heterochromatin regions, thereby playing a central role in the establishment of constitutive heterochromatin at pericentric and telomere regions. H3 'Lys-9' trimethylation is also required to direct DNA methylation at pericentric repeats. SUV39H1 is targeted to histone H3 via its interaction with RB1 and is involved in many processes, such as cell cycle regulation, transcriptional repression and regulation of telomere length. May participate in regulation of higher-order chromatin organization during spermatogenesis. Recruited by the large PER complex to the E-box elements of the circadian target genes such as PER2 itself or PER1, contributes to the conversion of local chromatin to a heterochromatin-like repressive state through H3 'Lys-9' trimethylation. The sequence is that of Histone-lysine N-methyltransferase SUV39H2 (SUV39H2) from Homo sapiens (Human).